The following is a 57-amino-acid chain: Small ribosomal subunit protein bS21 (57 aa).

The disordered stretch occupies residues 35–57 (REFYEKPSVRRKKKSEAARKRKY). Residues 43 to 57 (VRRKKKSEAARKRKY) are compositionally biased toward basic residues.

It belongs to the bacterial ribosomal protein bS21 family.

The protein is Small ribosomal subunit protein bS21 of Bacillus licheniformis (strain ATCC 14580 / DSM 13 / JCM 2505 / CCUG 7422 / NBRC 12200 / NCIMB 9375 / NCTC 10341 / NRRL NRS-1264 / Gibson 46).